A 94-amino-acid polypeptide reads, in one-letter code: MFTINAEVRKEQGKGASRRLRAANKFPAIIYGGAEAPIAIELDHDQVMNMQAKAEFYSEVLTIVVDGKEVKVKAQAVQRHAFKPKLTHIDFVRA.

The protein belongs to the bacterial ribosomal protein bL25 family. In terms of assembly, part of the 50S ribosomal subunit; part of the 5S rRNA/L5/L18/L25 subcomplex. Contacts the 5S rRNA. Binds to the 5S rRNA independently of L5 and L18.

In terms of biological role, this is one of the proteins that binds to the 5S RNA in the ribosome where it forms part of the central protuberance. This is Large ribosomal subunit protein bL25 from Citrobacter koseri (strain ATCC BAA-895 / CDC 4225-83 / SGSC4696).